The following is a 150-amino-acid chain: Deoxyuridine 5'-triphosphate nucleotidohydrolase (150 aa).

Residues 69 to 71 (RSG), Asn82, 86 to 88 (LID), and Lys96 contribute to the substrate site.

It belongs to the dUTPase family. Mg(2+) serves as cofactor.

It catalyses the reaction dUTP + H2O = dUMP + diphosphate + H(+). The protein operates within pyrimidine metabolism; dUMP biosynthesis; dUMP from dCTP (dUTP route): step 2/2. In terms of biological role, this enzyme is involved in nucleotide metabolism: it produces dUMP, the immediate precursor of thymidine nucleotides and it decreases the intracellular concentration of dUTP so that uracil cannot be incorporated into DNA. This Neisseria meningitidis serogroup A / serotype 4A (strain DSM 15465 / Z2491) protein is Deoxyuridine 5'-triphosphate nucleotidohydrolase.